The sequence spans 142 residues: Large ribosomal subunit protein uL13 (142 aa).

It belongs to the universal ribosomal protein uL13 family. As to quaternary structure, part of the 50S ribosomal subunit.

In terms of biological role, this protein is one of the early assembly proteins of the 50S ribosomal subunit, although it is not seen to bind rRNA by itself. It is important during the early stages of 50S assembly. The polypeptide is Large ribosomal subunit protein uL13 (Nitrosococcus oceani (strain ATCC 19707 / BCRC 17464 / JCM 30415 / NCIMB 11848 / C-107)).